The sequence spans 375 residues: Proclotting enzyme (375 aa).

The N-terminal stretch at 1-21 is a signal peptide; sequence MLVNNVFSLLCFPLLMSVVRC. The propeptide occupies 22 to 27; that stretch reads STLSRQ. Glutamine 30 is modified (pyrrolidone carboxylic acid). The 46-residue stretch at 39–84 folds into the Clip domain; sequence LCSNRFTEEGTCKNVLDCRILLQKNDYNLLKESICGFEGITPKVCC. 3 disulfides stabilise this stretch: cysteine 40–cysteine 83, cysteine 50–cysteine 73, and cysteine 56–cysteine 84. The tract at residues 90–113 is disordered; the sequence is VISSTQAPPETTTTERPPKQIPPN. Intrachain disulfides connect cysteine 118–cysteine 248, cysteine 157–cysteine 173, cysteine 295–cysteine 311, and cysteine 322–cysteine 351. The N-linked (GlcNAc...) asparagine glycan is linked to asparagine 122. The 248-residue stretch at 128–375 folds into the Peptidase S1 domain; the sequence is IIGGREAPIG…FLDWIAEHMV (248 aa). Histidine 172 functions as the Charge relay system in the catalytic mechanism. Positions 194, 196, 199, and 202 each coordinate Ca(2+). Catalysis depends on aspartate 228, which acts as the Charge relay system. N-linked (GlcNAc...) asparagine glycosylation is found at asparagine 235 and asparagine 304. The active-site Charge relay system is the serine 326.

It belongs to the peptidase S1 family. CLIP subfamily. In the active form, heterodimer of a light chain and a heavy chain; disulfide-linked. Forms a covalent heterodimer with intracellular coagulation inhibitor 2/LICI-2. In terms of processing, proteolytically cleaved into its mature active form by serine protease factor B. Cleavage produces a 25 kDa light chain containing the CLIP domain and a catalytic 31 kDa heavy chain which remain covalently associated through an interchain disulfide bond. Proteolytically cleaved by clotting factor G subunit beta. Contains six O-linked carbohydrate chains in the N-terminal light chain. Expressed in hemocytes (at protein level).

It localises to the cytoplasmic vesicle. Its subcellular location is the secretory vesicle. It is found in the secreted. The enzyme catalyses Selective cleavage of 18-Arg-|- and 47-Arg-|- bonds in coagulogen to form coagulin and fragments.. With respect to regulation, inhibited by intracellular coagulation inhibitor 2/LICI-2 and to a lesser extent by intracellular coagulation inhibitor 3/LICI-3. This enzyme is closely associated with an endotoxin-sensitive hemolymph coagulation system in limulus. Its active form catalyzes the conversion of coagulogen to insoluble coagulin gel. This is Proclotting enzyme from Tachypleus tridentatus (Japanese horseshoe crab).